Reading from the N-terminus, the 511-residue chain is Probable cytochrome P450 4d21 (511 aa).

Cysteine 456 is a binding site for heme.

It belongs to the cytochrome P450 family. Heme is required as a cofactor.

The protein resides in the endoplasmic reticulum membrane. Its subcellular location is the microsome membrane. Functionally, may be involved in the metabolism of insect hormones and in the breakdown of synthetic insecticides. The polypeptide is Probable cytochrome P450 4d21 (Cyp4d21) (Drosophila melanogaster (Fruit fly)).